Consider the following 275-residue polypeptide: Probable dual specificity protein phosphatase DDB_G0271350 (275 aa).

In terms of domain architecture, Tyrosine-protein phosphatase spans 2–143 (GISMILDNFL…LCDLELKLTN (142 aa)). Catalysis depends on cysteine 87, which acts as the Phosphocysteine intermediate.

This sequence belongs to the protein-tyrosine phosphatase family. Non-receptor class dual specificity subfamily.

The enzyme catalyses O-phospho-L-tyrosyl-[protein] + H2O = L-tyrosyl-[protein] + phosphate. The catalysed reaction is O-phospho-L-seryl-[protein] + H2O = L-seryl-[protein] + phosphate. It catalyses the reaction O-phospho-L-threonyl-[protein] + H2O = L-threonyl-[protein] + phosphate. In terms of biological role, has a dual specificity toward Ser/Thr and Tyr-containing proteins. The protein is Probable dual specificity protein phosphatase DDB_G0271350 of Dictyostelium discoideum (Social amoeba).